The sequence spans 146 residues: MQVILLEPSRLGKTGEVVSVKDGYARNWLIPQGLAVSATRTNMKTLEAQLRSIEKRQAQEKAVAEDLASRLNGVAVELSVRAGEGKIYGAVTHQDVANSLDQLGFDVDRRKIDMPKTVKEVGEYDIAYRAHPEVTIPMKLVVHAAK.

Belongs to the bacterial ribosomal protein bL9 family. As to quaternary structure, part of the 50S ribosomal subunit. Contacts protein L31.

Binds to the 23S rRNA and protein L31. This Deinococcus radiodurans (strain ATCC 13939 / DSM 20539 / JCM 16871 / CCUG 27074 / LMG 4051 / NBRC 15346 / NCIMB 9279 / VKM B-1422 / R1) protein is Large ribosomal subunit protein bL9 (rplI).